We begin with the raw amino-acid sequence, 267 residues long: Ribonuclease HII (267 aa).

The RNase H type-2 domain occupies 57 to 245 (WPVAGCDEVG…VVAARERHRA (189 aa)). Residues aspartate 63, glutamate 64, and aspartate 154 each contribute to the a divalent metal cation site.

It belongs to the RNase HII family. The cofactor is Mn(2+). Mg(2+) serves as cofactor.

The protein resides in the cytoplasm. It carries out the reaction Endonucleolytic cleavage to 5'-phosphomonoester.. Functionally, endonuclease that specifically degrades the RNA of RNA-DNA hybrids. This chain is Ribonuclease HII, found in Nitrobacter hamburgensis (strain DSM 10229 / NCIMB 13809 / X14).